Consider the following 483-residue polypeptide: (R)-mandelonitrile beta-glucosyltransferase (483 aa).

Catalysis depends on H22, which acts as the Proton acceptor. H22 contributes to the an anthocyanidin binding site. D124 functions as the Charge relay in the catalytic mechanism. UDP-alpha-D-glucose contacts are provided by T146, Q363, H378, W381, N382, S383, and E386. Residue A401 participates in an anthocyanidin binding. UDP-alpha-D-glucose contacts are provided by E402 and Q403.

This sequence belongs to the UDP-glycosyltransferase family.

The enzyme catalyses (R)-mandelonitrile + UDP-alpha-D-glucose = (R)-prunasin + UDP + H(+). Its function is as follows. Involved in the biosynthesis of the cyanogenic glycoside (R)-prunasin, a precursor of (R)-amygdalin, which at high concentrations is associated with intense bitterness in kernels of almond. Stereo-selectively glucosylates (R)-mandelonitrile to produce (R)-prunasin. In Prunus dulcis (Almond), this protein is (R)-mandelonitrile beta-glucosyltransferase.